Here is a 334-residue protein sequence, read N- to C-terminus: Nucleoid-associated protein YPN_2714 (334 aa).

This sequence belongs to the YejK family.

Its subcellular location is the cytoplasm. The protein resides in the nucleoid. This Yersinia pestis bv. Antiqua (strain Nepal516) protein is Nucleoid-associated protein YPN_2714.